The sequence spans 913 residues: Ubiquitin carboxyl-terminal hydrolase 20 (913 aa).

A UBP-type zinc finger spans residues 6–111 (DLCPHLDSIG…GSSKFSEQDS (106 aa)). Zn(2+)-binding residues include Cys-8, His-10, Cys-30, Cys-33, Cys-43, Cys-48, Cys-53, His-60, His-64, His-70, Cys-83, and Cys-86. 3 positions are modified to phosphoserine: Ser-111, Ser-131, and Ser-133. In terms of domain architecture, USP spans 144-684 (TGMKNLGNSC…EGYVLFYRKS (541 aa)). Cys-153 functions as the Nucleophile in the catalytic mechanism. Residues 256–414 (LTEARDSDSS…SSSPPRASPV (159 aa)) are disordered. Position 257 is a phosphothreonine (Thr-257). The segment covering 258–278 (EARDSDSSDTDEKREGDRSPS) has biased composition (basic and acidic residues). Phosphoserine is present on Ser-304. A compositionally biased stretch (basic and acidic residues) spans 315–331 (EASRAISEKERMKDRKF). Position 367 is a phosphoserine (Ser-367). Thr-376 is subject to Phosphothreonine. Ser-407 and Ser-412 each carry phosphoserine. His-642 (proton acceptor) is an active-site residue. DUSP domains are found at residues 686–779 (EEAV…LYVC) and 788–891 (ALAK…RQSV).

This sequence belongs to the peptidase C19 family. USP20/USP33 subfamily. As to quaternary structure, interacts with VHL, leading to its ubiquitination and subsequent degradation. Interacts with CCP110. Interacts with DIO2. Interacts with HIF1A. Interacts with ADRB2. Interacts with USP18. Ubiquitinated via a VHL-dependent pathway for proteasomal degradation.

It is found in the cytoplasm. Its subcellular location is the endoplasmic reticulum. It localises to the perinuclear region. The protein localises to the cytoskeleton. The protein resides in the microtubule organizing center. It is found in the centrosome. It carries out the reaction Thiol-dependent hydrolysis of ester, thioester, amide, peptide and isopeptide bonds formed by the C-terminal Gly of ubiquitin (a 76-residue protein attached to proteins as an intracellular targeting signal).. In terms of biological role, deubiquitinating enzyme that plays a role in many cellular processes including autophagy, cellular antiviral response or membrane protein biogenesis. Attenuates TLR4-mediated NF-kappa-B signaling by cooperating with beta-arrestin-2/ARRB2 and inhibiting TRAF6 autoubiquitination. Promotes cellular antiviral responses by deconjugating 'Lys-33' and 'Lys-48'-linked ubiquitination of STING1 leading to its stabilization. Plays an essential role in autophagy induction by regulating the ULK1 stability through deubiquitination of ULK1. Acts as a positive regulator for NF-kappa-B activation by TNF-alpha through deubiquitinating 'Lys-48'-linked polyubiquitination of SQSTM1, leading to its increased stability. Acts as a regulator of G-protein coupled receptor (GPCR) signaling by mediating the deubiquitination beta-2 adrenergic receptor (ADRB2). Plays a central role in ADRB2 recycling and resensitization after prolonged agonist stimulation by constitutively binding ADRB2, mediating deubiquitination of ADRB2 and inhibiting lysosomal trafficking of ADRB2. Upon dissociation, it is probably transferred to the translocated beta-arrestins, possibly leading to beta-arrestins deubiquitination and disengagement from ADRB2. This suggests the existence of a dynamic exchange between the ADRB2 and beta-arrestins. Deubiquitinates DIO2, thereby regulating thyroid hormone regulation. Deubiquitinates HIF1A, leading to stabilize HIF1A and enhance HIF1A-mediated activity. Deubiquitinates MCL1, a pivotal member of the anti-apoptotic Bcl-2 protein family to regulate its stability. Within the endoplasmic reticulum, participates with USP33 in the rescue of post-translationally targeted membrane proteins that are inappropriately ubiquitinated by the cytosolic protein quality control in the cytosol. The chain is Ubiquitin carboxyl-terminal hydrolase 20 (USP20) from Pongo abelii (Sumatran orangutan).